Reading from the N-terminus, the 62-residue chain is Beta-defensin 33 (62 aa).

A signal peptide spans 1–20 (MRLLFLLFILLVCLAQTTSG). Cystine bridges form between Cys30-Cys59, Cys37-Cys52, and Cys45-Cys60.

The protein belongs to the beta-defensin family.

It is found in the secreted. Its function is as follows. Has antibacterial activity. This chain is Beta-defensin 33 (Defb33), found in Mus musculus (Mouse).